Here is a 149-residue protein sequence, read N- to C-terminus: Large ribosomal subunit protein uL15 (149 aa).

The interval 14 to 63 (ASRKRVGRGSGSGLGCTSGKGNKGQNARAGGGVRPGFEGGQMPLQRRLPK) is disordered. 2 stretches are compositionally biased toward gly residues: residues 21-35 (RGSG…GKGN) and 42-52 (AGGGVRPGFEG).

The protein belongs to the universal ribosomal protein uL15 family. Part of the 50S ribosomal subunit.

In terms of biological role, binds to the 23S rRNA. The chain is Large ribosomal subunit protein uL15 from Nitratidesulfovibrio vulgaris (strain DSM 19637 / Miyazaki F) (Desulfovibrio vulgaris).